Reading from the N-terminus, the 221-residue chain is Penicillin-binding protein activator LpoB (221 aa).

The first 20 residues, 1–20 (MLNRMYRYALLATVALALSG), serve as a signal peptide directing secretion. Residue Cys21 is the site of N-palmitoyl cysteine attachment. The S-diacylglycerol cysteine moiety is linked to residue Cys21. The tract at residues 29-82 (PAPVEEAQPGTQQPTQPVPPPTQPVPTVPSVPSIPAQPGPIEHQPENATPEPKA) is disordered. Residues 44–57 (QPVPPPTQPVPTVP) show a composition bias toward pro residues.

This sequence belongs to the LpoB family. Interacts with PBP1b.

The protein localises to the cell outer membrane. Functionally, regulator of peptidoglycan synthesis that is essential for the function of penicillin-binding protein 1B (PBP1b). This chain is Penicillin-binding protein activator LpoB, found in Cronobacter turicensis (strain DSM 18703 / CCUG 55852 / LMG 23827 / z3032).